A 337-amino-acid chain; its full sequence is Adenine deaminase (337 aa).

Zn(2+)-binding residues include His-17, His-19, and His-197. Glu-200 serves as the catalytic Proton donor. Position 278 (Asp-278) interacts with Zn(2+). Asp-279 contributes to the substrate binding site.

The protein belongs to the metallo-dependent hydrolases superfamily. Adenosine and AMP deaminases family. Adenine deaminase type 2 subfamily. Zn(2+) is required as a cofactor.

It carries out the reaction adenine + H2O + H(+) = hypoxanthine + NH4(+). Its function is as follows. Catalyzes the hydrolytic deamination of adenine to hypoxanthine. Plays an important role in the purine salvage pathway and in nitrogen catabolism. The sequence is that of Adenine deaminase from Zymomonas mobilis subsp. mobilis (strain ATCC 31821 / ZM4 / CP4).